The following is a 448-amino-acid chain: Noelin-2 (448 aa).

An N-terminal signal peptide occupies residues 1 to 14; the sequence is MRKLRQTGTTIAGG. Coiled-coil stretches lie at residues 52 to 79 and 130 to 187; these read RDGRSRELRQLMEKVQNVSQSMEVLELR and LEQY…AQKL. 6 N-linked (GlcNAc...) asparagine glycosylation sites follow: Asn68, Asn149, Asn269, Asn304, Asn393, and Asn435. One can recognise an Olfactomedin-like domain in the interval 188-440; it reads GCGKLTGVSN…QVLYNVTLFH (253 aa). A disulfide bridge links Cys189 with Cys371.

Peripherally associated with AMPAR complex. AMPAR complex consists of an inner core made of 4 pore-forming GluA/GRIA proteins (GRIA1, GRIA2, GRIA3 and GRIA4) and 4 major auxiliary subunits arranged in a twofold symmetry. One of the two pairs of distinct binding sites is occupied either by CNIH2, CNIH3 or CACNG2, CACNG3. The other harbors CACNG2, CACNG3, CACNG4, CACNG8 or GSG1L. This inner core of AMPAR complex is complemented by outer core constituents binding directly to the GluA/GRIA proteins at sites distinct from the interaction sites of the inner core constituents. Outer core constituents include at least PRRT1, PRRT2, CKAMP44/SHISA9, FRRS1L and NRN1. The proteins of the inner and outer core serve as a platform for other, more peripherally associated AMPAR constituents, including OLFM2. Alone or in combination, these auxiliary subunits control the gating and pharmacology of the AMPAR complex and profoundly impact their biogenesis and protein processing. Interacts with GRIA2. Interacts with OLFM1 and OLFM3. Interacts with SRF; the interaction promotes dissociation of SRF from the transcriptional repressor HEY2. Interacts with RUNX2. Expressed in the brain (at protein level). In the developing eye, first detected at 12 dpc in the retinal pigmented epithelium and preferentially expressed in differentiating retinal ganglion cells between 15 and 18 dpc. In the brain, expression is detected mainly in the olfactory bulb, cortex, piriform cortex, olfactory trabeculae, and inferior and superior colliculus. In the adult eye, expression is detected mainly in retinal ganglion cells. Expressed in carotid arteries.

The protein localises to the secreted. Its subcellular location is the synapse. It localises to the membrane. The protein resides in the nucleus. It is found in the cytoplasm. Involved in transforming growth factor beta (TGF-beta)-induced smooth muscle differentiation. TGF-beta induces expression and nuclear translocation of OLFM2 where it binds to SRF, causing its dissociation from the transcriptional repressor HEY2/HERP1 and facilitating binding of SRF to target genes. Plays a role in AMPAR complex organization. Is a regulator of vascular smooth-muscle cell (SMC) phenotypic switching, that acts by promoting RUNX2 and inhibiting MYOCD binding to SRF. SMC phenotypic switching is the process through which vascular SMCs undergo transition between a quiescent contractile phenotype and a proliferative synthetic phenotype in response to pathological stimuli. SMC phenotypic plasticity is essential for vascular development and remodeling. This is Noelin-2 (Olfm2) from Mus musculus (Mouse).